Consider the following 156-residue polypeptide: Small ribosomal subunit protein uS7 (156 aa).

This sequence belongs to the universal ribosomal protein uS7 family. Part of the 30S ribosomal subunit. Contacts proteins S9 and S11.

In terms of biological role, one of the primary rRNA binding proteins, it binds directly to 16S rRNA where it nucleates assembly of the head domain of the 30S subunit. Is located at the subunit interface close to the decoding center, probably blocks exit of the E-site tRNA. The sequence is that of Small ribosomal subunit protein uS7 from Staphylococcus carnosus (strain TM300).